A 464-amino-acid chain; its full sequence is Probable LL-diaminopimelate aminotransferase, chloroplastic (464 aa).

The transit peptide at 1–39 directs the protein to the chloroplast; it reads MAASPAAGAAAATVSSFVSPSSFSSVKASKPDRLRPARR. G102 is a substrate binding site. Y132 contacts pyridoxal 5'-phosphate. The substrate site is built by E135, K167, Y190, and N247. Residues N247, D275, Y278, S305, and S307 each contribute to the pyridoxal 5'-phosphate site. An N6-(pyridoxal phosphate)lysine modification is found at K308. Position 316 (R316) interacts with pyridoxal 5'-phosphate. N347 and R442 together coordinate substrate.

This sequence belongs to the class-I pyridoxal-phosphate-dependent aminotransferase family. LL-diaminopimelate aminotransferase subfamily. As to quaternary structure, homodimer. Pyridoxal 5'-phosphate serves as cofactor.

The protein resides in the plastid. It localises to the chloroplast. It catalyses the reaction (2S,6S)-2,6-diaminopimelate + 2-oxoglutarate = (S)-2,3,4,5-tetrahydrodipicolinate + L-glutamate + H2O + H(+). It participates in amino-acid biosynthesis; L-lysine biosynthesis via DAP pathway; LL-2,6-diaminopimelate from (S)-tetrahydrodipicolinate (aminotransferase route): step 1/1. In terms of biological role, required for lysine biosynthesis. Catalyzes the direct conversion of tetrahydrodipicolinate to LL-diaminopimelate, a reaction that requires three enzymes in E.coli. The sequence is that of Probable LL-diaminopimelate aminotransferase, chloroplastic (AGD2) from Oryza sativa subsp. japonica (Rice).